Here is a 461-residue protein sequence, read N- to C-terminus: tRNA modification GTPase MnmE (461 aa).

3 residues coordinate (6S)-5-formyl-5,6,7,8-tetrahydrofolate: R27, E89, and R128. The TrmE-type G domain occupies 224-382 (GLATAIVGRP…LENAIEKLFF (159 aa)). N234 provides a ligand contact to K(+). GTP is bound by residues 234-239 (NVGKSS), 253-259 (TDIAGTT), and 278-281 (DTAG). S238 lines the Mg(2+) pocket. K(+) contacts are provided by T253, I255, and T258. Mg(2+) is bound at residue T259. Position 461 (K461) interacts with (6S)-5-formyl-5,6,7,8-tetrahydrofolate.

It belongs to the TRAFAC class TrmE-Era-EngA-EngB-Septin-like GTPase superfamily. TrmE GTPase family. As to quaternary structure, homodimer. Heterotetramer of two MnmE and two MnmG subunits. K(+) is required as a cofactor.

The protein localises to the cytoplasm. In terms of biological role, exhibits a very high intrinsic GTPase hydrolysis rate. Involved in the addition of a carboxymethylaminomethyl (cmnm) group at the wobble position (U34) of certain tRNAs, forming tRNA-cmnm(5)s(2)U34. The sequence is that of tRNA modification GTPase MnmE from Lactobacillus gasseri (strain ATCC 33323 / DSM 20243 / BCRC 14619 / CIP 102991 / JCM 1131 / KCTC 3163 / NCIMB 11718 / NCTC 13722 / AM63).